A 220-amino-acid chain; its full sequence is Fructose-6-phosphate aldolase (220 aa).

Residue K85 is the Schiff-base intermediate with substrate of the active site.

This sequence belongs to the transaldolase family. Type 3A subfamily. Homodecamer.

The protein resides in the cytoplasm. It catalyses the reaction beta-D-fructose 6-phosphate = dihydroxyacetone + D-glyceraldehyde 3-phosphate. Catalyzes the reversible formation of fructose 6-phosphate from dihydroxyacetone and D-glyceraldehyde 3-phosphate via an aldolization reaction. The protein is Fructose-6-phosphate aldolase of Salmonella schwarzengrund (strain CVM19633).